Reading from the N-terminus, the 413-residue chain is Phosphopentomutase (413 aa).

The Mn(2+) site is built by Asp-11, Asp-306, His-311, Asp-347, His-348, and His-359.

The protein belongs to the phosphopentomutase family. It depends on Mn(2+) as a cofactor.

The protein resides in the cytoplasm. It carries out the reaction 2-deoxy-alpha-D-ribose 1-phosphate = 2-deoxy-D-ribose 5-phosphate. It catalyses the reaction alpha-D-ribose 1-phosphate = D-ribose 5-phosphate. It functions in the pathway carbohydrate degradation; 2-deoxy-D-ribose 1-phosphate degradation; D-glyceraldehyde 3-phosphate and acetaldehyde from 2-deoxy-alpha-D-ribose 1-phosphate: step 1/2. Isomerase that catalyzes the conversion of deoxy-ribose 1-phosphate (dRib-1-P) and ribose 1-phosphate (Rib-1-P) to deoxy-ribose 5-phosphate (dRib-5-P) and ribose 5-phosphate (Rib-5-P), respectively. The chain is Phosphopentomutase from Helicobacter pylori (strain J99 / ATCC 700824) (Campylobacter pylori J99).